A 188-amino-acid polypeptide reads, in one-letter code: Elongation factor P (188 aa).

The residue at position 34 (Lys-34) is an N6-(3,6-diaminohexanoyl)-5-hydroxylysine.

The protein belongs to the elongation factor P family. In terms of processing, may be beta-lysylated on the epsilon-amino group of Lys-34 by the combined action of EpmA and EpmB, and then hydroxylated on the C5 position of the same residue by EpmC (if this protein is present). Lysylation is critical for the stimulatory effect of EF-P on peptide-bond formation. The lysylation moiety may extend toward the peptidyltransferase center and stabilize the terminal 3-CCA end of the tRNA. Hydroxylation of the C5 position on Lys-34 may allow additional potential stabilizing hydrogen-bond interactions with the P-tRNA.

It is found in the cytoplasm. It functions in the pathway protein biosynthesis; polypeptide chain elongation. Its function is as follows. Involved in peptide bond synthesis. Alleviates ribosome stalling that occurs when 3 or more consecutive Pro residues or the sequence PPG is present in a protein, possibly by augmenting the peptidyl transferase activity of the ribosome. Modification of Lys-34 is required for alleviation. This is Elongation factor P from Xylella fastidiosa (strain M23).